Here is a 316-residue protein sequence, read N- to C-terminus: MTQLDSLRSMTVVVADTGDIEAIKQYQPQDATTNPSLILSASALPQYAPLIDDAIAYAKTKSDCPRQQLVDAEDKLAVNIGLEILKIIPGRISTEVDARLSYDTQATIEKARKLIKLYNEAGIENHRILIKIASTWQGIRAAEVLEKEGINCNLTLLFSEAQARACAEAGVYLISPFVGRILDWHKANTGRQDYPAAEDPGVISVTQIYNYYKQHNYKTVVMGASFRNVDEIIELAGCDRLTISPTLLSHLQAREGELVRKLAFSGELKDRPQPLTESEFYWQHNSDPMAVAKLAEGICKFAEDQEKLEKMLLERL.

Residue lysine 131 is the Schiff-base intermediate with substrate of the active site.

It belongs to the transaldolase family. Type 1 subfamily. As to quaternary structure, homodimer.

It localises to the cytoplasm. The enzyme catalyses D-sedoheptulose 7-phosphate + D-glyceraldehyde 3-phosphate = D-erythrose 4-phosphate + beta-D-fructose 6-phosphate. It participates in carbohydrate degradation; pentose phosphate pathway; D-glyceraldehyde 3-phosphate and beta-D-fructose 6-phosphate from D-ribose 5-phosphate and D-xylulose 5-phosphate (non-oxidative stage): step 2/3. Functionally, transaldolase is important for the balance of metabolites in the pentose-phosphate pathway. This Pasteurella multocida (strain Pm70) protein is Transaldolase B (talB).